The sequence spans 197 residues: ATP-dependent Clp protease proteolytic subunit (197 aa).

Residue Ser-98 is the Nucleophile of the active site. His-123 is an active-site residue.

Belongs to the peptidase S14 family. As to quaternary structure, fourteen ClpP subunits assemble into 2 heptameric rings which stack back to back to give a disk-like structure with a central cavity, resembling the structure of eukaryotic proteasomes.

It is found in the cytoplasm. The catalysed reaction is Hydrolysis of proteins to small peptides in the presence of ATP and magnesium. alpha-casein is the usual test substrate. In the absence of ATP, only oligopeptides shorter than five residues are hydrolyzed (such as succinyl-Leu-Tyr-|-NHMec, and Leu-Tyr-Leu-|-Tyr-Trp, in which cleavage of the -Tyr-|-Leu- and -Tyr-|-Trp bonds also occurs).. Cleaves peptides in various proteins in a process that requires ATP hydrolysis. Has a chymotrypsin-like activity. Plays a major role in the degradation of misfolded proteins. The sequence is that of ATP-dependent Clp protease proteolytic subunit from Haemophilus ducreyi (strain 35000HP / ATCC 700724).